Here is a 244-residue protein sequence, read N- to C-terminus: UPF0280 protein Msp_1322 (244 aa).

Belongs to the UPF0280 family.

This is UPF0280 protein Msp_1322 from Methanosphaera stadtmanae (strain ATCC 43021 / DSM 3091 / JCM 11832 / MCB-3).